A 554-amino-acid polypeptide reads, in one-letter code: Valerianol synthase TPS8 (554 aa).

The DDXXD motif signature appears at Q288 to G292. The Mg(2+) site is built by D307, D311, D452, S456, and E460.

The protein belongs to the terpene synthase family. The cofactor is Mg(2+).

It catalyses the reaction (2E,6E)-farnesyl diphosphate + H2O = valerianol + diphosphate. The protein operates within secondary metabolite biosynthesis; terpenoid biosynthesis. Functionally, terpene synthase that catalyzes the biosynthesis of the terpene valerianol. The sequence is that of Valerianol synthase TPS8 from Camellia sinensis (Tea plant).